The sequence spans 178 residues: 2-C-methyl-D-erythritol 2,4-cyclodiphosphate synthase (178 aa).

Residues Asp-24, His-26, and His-61 each contribute to the a divalent metal cation site. 4-CDP-2-C-methyl-D-erythritol 2-phosphate is bound at residue 24 to 26 (DSH). 150-153 (TSGE) lines the 4-CDP-2-C-methyl-D-erythritol 2-phosphate pocket.

Belongs to the IspF family. As to quaternary structure, homotrimer. A divalent metal cation is required as a cofactor.

It carries out the reaction 4-CDP-2-C-methyl-D-erythritol 2-phosphate = 2-C-methyl-D-erythritol 2,4-cyclic diphosphate + CMP. It participates in isoprenoid biosynthesis; isopentenyl diphosphate biosynthesis via DXP pathway; isopentenyl diphosphate from 1-deoxy-D-xylulose 5-phosphate: step 4/6. Functionally, involved in the biosynthesis of isopentenyl diphosphate (IPP) and dimethylallyl diphosphate (DMAPP), two major building blocks of isoprenoid compounds. Catalyzes the conversion of 4-diphosphocytidyl-2-C-methyl-D-erythritol 2-phosphate (CDP-ME2P) to 2-C-methyl-D-erythritol 2,4-cyclodiphosphate (ME-CPP) with a corresponding release of cytidine 5-monophosphate (CMP). The polypeptide is 2-C-methyl-D-erythritol 2,4-cyclodiphosphate synthase (Chlamydia muridarum (strain MoPn / Nigg)).